The sequence spans 356 residues: Histidinol-phosphate aminotransferase (356 aa).

K214 is subject to N6-(pyridoxal phosphate)lysine.

The protein belongs to the class-II pyridoxal-phosphate-dependent aminotransferase family. Histidinol-phosphate aminotransferase subfamily. Homodimer. The cofactor is pyridoxal 5'-phosphate.

It carries out the reaction L-histidinol phosphate + 2-oxoglutarate = 3-(imidazol-4-yl)-2-oxopropyl phosphate + L-glutamate. The protein operates within amino-acid biosynthesis; L-histidine biosynthesis; L-histidine from 5-phospho-alpha-D-ribose 1-diphosphate: step 7/9. This Shigella flexneri serotype 5b (strain 8401) protein is Histidinol-phosphate aminotransferase.